The chain runs to 746 residues: Iron-sulfur clusters transporter ABCB7, mitochondrial (746 aa).

Residues 1-19 (MAPMLVSLNCGIRVQRRTL) constitute a mitochondrion transit peptide. At 20–133 (TLLIRQTSSY…KDRPDLRARV (114 aa)) the chain is on the mitochondrial matrix side. The ABC transmembrane type-1 domain occupies 133 to 429 (VAVSLGLLAG…LGTVYRETRQ (297 aa)). The chain crosses the membrane as a helical span at residues 134-154 (AVSLGLLAGAKLTNVMVPFMF). Over 155–176 (KYAVDELNQMSGHMLNLNDAPS) the chain is Mitochondrial intermembrane. Residues 177-199 (TVATMTTAVLIGYGVSRAGSALF) traverse the membrane as a helical segment. Over 200–252 (NELRNTVFGKVAQSSIRRIAKNVFLHLHNLDLGFHLSRQTGALSKAIDRGTRG) the chain is Mitochondrial matrix. The helical transmembrane segment at 253–273 (ISFVLSALVFNLGPTVFEMFL) threads the bilayer. Residues 274–283 (VSAILYYKCG) are Mitochondrial intermembrane-facing. A helical membrane pass occupies residues 284 to 304 (GEFAAVALGTLSAYTIFTILV). Residues 305 to 375 (TQWRTRFRIE…TLAMLNFGQS (71 aa)) lie on the Mitochondrial matrix side of the membrane. Glutathione is bound by residues 308-312 (RTRFR) and 371-374 (NFGQ). Residues 376–396 (AIFSVGLTAIMLLASKGIAAG) form a helical membrane-spanning segment. The Mitochondrial intermembrane portion of the chain corresponds to 397-402 (NMTVGD). Residues 403–423 (LVMVNGLLFQLSLPLNFLGTV) traverse the membrane as a helical segment. G421 provides a ligand contact to glutathione. The Mitochondrial matrix segment spans residues 424–746 (YRETRQALID…SVKGCGNCSC (323 aa)). Positions 465-699 (IRFEDVYFEY…PGSLYAELWN (235 aa)) constitute an ABC transporter domain. Residues Y474 and 498–505 (GGSGSGKS) contribute to the ATP site. The disordered stretch occupies residues 708–728 (SRKSSSAPAAERLSQKEEERK).

This sequence belongs to the ABC transporter superfamily. ABCB family. Heavy Metal importer (TC 3.A.1.210) subfamily. As to quaternary structure, homodimer.

Its subcellular location is the mitochondrion inner membrane. It is found in the mitochondrion. The catalysed reaction is (glutathione)4[2Fe(III)-2S] cluster(in) + ATP + H2O = (glutathione)4[2Fe(III)-2S] cluster(out) + ADP + phosphate + H(+). Functionally, exports glutathione-coordinated iron-sulfur clusters such as [2Fe-2S]-(GS)4 cluster from the mitochondria to the cytosol in an ATP-dependent manner allowing the assembly of the cytosolic iron-sulfur (Fe/S) cluster-containing proteins and participates in iron homeostasis. May play a role in iron and lipid metabolism. This is Iron-sulfur clusters transporter ABCB7, mitochondrial from Oryzias latipes (Japanese rice fish).